A 110-amino-acid polypeptide reads, in one-letter code: Large ribosomal subunit protein uL22 (110 aa).

Belongs to the universal ribosomal protein uL22 family. As to quaternary structure, part of the 50S ribosomal subunit.

Its function is as follows. This protein binds specifically to 23S rRNA; its binding is stimulated by other ribosomal proteins, e.g. L4, L17, and L20. It is important during the early stages of 50S assembly. It makes multiple contacts with different domains of the 23S rRNA in the assembled 50S subunit and ribosome. In terms of biological role, the globular domain of the protein is located near the polypeptide exit tunnel on the outside of the subunit, while an extended beta-hairpin is found that lines the wall of the exit tunnel in the center of the 70S ribosome. This is Large ribosomal subunit protein uL22 from Photorhabdus laumondii subsp. laumondii (strain DSM 15139 / CIP 105565 / TT01) (Photorhabdus luminescens subsp. laumondii).